A 241-amino-acid chain; its full sequence is Proteasome subunit alpha (241 aa).

The protein belongs to the peptidase T1A family. The 20S proteasome core is composed of 14 alpha and 14 beta subunits that assemble into four stacked heptameric rings, resulting in a barrel-shaped structure. The two inner rings, each composed of seven catalytic beta subunits, are sandwiched by two outer rings, each composed of seven alpha subunits. The catalytic chamber with the active sites is on the inside of the barrel. Has a gated structure, the ends of the cylinder being occluded by the N-termini of the alpha-subunits. Is capped at one or both ends by the proteasome regulatory ATPase, PAN.

The protein localises to the cytoplasm. With respect to regulation, the formation of the proteasomal ATPase PAN-20S proteasome complex, via the docking of the C-termini of PAN into the intersubunit pockets in the alpha-rings, triggers opening of the gate for substrate entry. Interconversion between the open-gate and close-gate conformations leads to a dynamic regulation of the 20S proteasome proteolysis activity. In terms of biological role, component of the proteasome core, a large protease complex with broad specificity involved in protein degradation. The polypeptide is Proteasome subunit alpha (Methanosphaerula palustris (strain ATCC BAA-1556 / DSM 19958 / E1-9c)).